Consider the following 650-residue polypeptide: Acetyl-coenzyme A synthetase (650 aa).

CoA-binding positions include 191-194, T311, and N335; that span reads RGGR. Residues 387 to 389, 411 to 416, D500, and R515 each bind ATP; these read GEP and DTWWQT. S523 serves as a coordination point for CoA. R526 contacts ATP. Mg(2+)-binding residues include V537, H539, and V542. R584 is a CoA binding site. K609 carries the N6-acetyllysine modification.

This sequence belongs to the ATP-dependent AMP-binding enzyme family. Mg(2+) serves as cofactor. In terms of processing, acetylated. Deacetylation by the SIR2-homolog deacetylase activates the enzyme.

It catalyses the reaction acetate + ATP + CoA = acetyl-CoA + AMP + diphosphate. Catalyzes the conversion of acetate into acetyl-CoA (AcCoA), an essential intermediate at the junction of anabolic and catabolic pathways. AcsA undergoes a two-step reaction. In the first half reaction, AcsA combines acetate with ATP to form acetyl-adenylate (AcAMP) intermediate. In the second half reaction, it can then transfer the acetyl group from AcAMP to the sulfhydryl group of CoA, forming the product AcCoA. The chain is Acetyl-coenzyme A synthetase from Shewanella baltica (strain OS155 / ATCC BAA-1091).